The sequence spans 301 residues: Probable porphobilinogen deaminase (301 aa).

S-(dipyrrolylmethanemethyl)cysteine is present on cysteine 241.

Belongs to the HMBS family. The cofactor is dipyrromethane.

It catalyses the reaction 4 porphobilinogen + H2O = hydroxymethylbilane + 4 NH4(+). Its pathway is porphyrin-containing compound metabolism; protoporphyrin-IX biosynthesis; coproporphyrinogen-III from 5-aminolevulinate: step 2/4. Its function is as follows. Tetrapolymerization of the monopyrrole PBG into the hydroxymethylbilane pre-uroporphyrinogen in several discrete steps. The chain is Probable porphobilinogen deaminase from Pyrobaculum islandicum (strain DSM 4184 / JCM 9189 / GEO3).